Reading from the N-terminus, the 466-residue chain is Asparagine--tRNA ligase (466 aa).

It belongs to the class-II aminoacyl-tRNA synthetase family. In terms of assembly, homodimer.

The protein localises to the cytoplasm. It catalyses the reaction tRNA(Asn) + L-asparagine + ATP = L-asparaginyl-tRNA(Asn) + AMP + diphosphate + H(+). In Pectobacterium atrosepticum (strain SCRI 1043 / ATCC BAA-672) (Erwinia carotovora subsp. atroseptica), this protein is Asparagine--tRNA ligase.